A 525-amino-acid chain; its full sequence is Bifunctional purine biosynthesis protein PurH (525 aa).

Residues 1 to 147 form the MGS-like domain; that stretch reads MTKIERALIS…KNWAHVAIVT (147 aa).

This sequence belongs to the PurH family.

The enzyme catalyses (6R)-10-formyltetrahydrofolate + 5-amino-1-(5-phospho-beta-D-ribosyl)imidazole-4-carboxamide = 5-formamido-1-(5-phospho-D-ribosyl)imidazole-4-carboxamide + (6S)-5,6,7,8-tetrahydrofolate. The catalysed reaction is IMP + H2O = 5-formamido-1-(5-phospho-D-ribosyl)imidazole-4-carboxamide. It participates in purine metabolism; IMP biosynthesis via de novo pathway; 5-formamido-1-(5-phospho-D-ribosyl)imidazole-4-carboxamide from 5-amino-1-(5-phospho-D-ribosyl)imidazole-4-carboxamide (10-formyl THF route): step 1/1. The protein operates within purine metabolism; IMP biosynthesis via de novo pathway; IMP from 5-formamido-1-(5-phospho-D-ribosyl)imidazole-4-carboxamide: step 1/1. This chain is Bifunctional purine biosynthesis protein PurH, found in Chromobacterium violaceum (strain ATCC 12472 / DSM 30191 / JCM 1249 / CCUG 213 / NBRC 12614 / NCIMB 9131 / NCTC 9757 / MK).